Here is a 385-residue protein sequence, read N- to C-terminus: Transcription factor TGAL3 (385 aa).

Residues 62–113 (LHALVGGGDGGDDAGEQRGADSSAVSKERRGDQKMQRRLAQNREAARKSRMR) are disordered. The span at 87–96 (SKERRGDQKM) shows a compositional bias: basic and acidic residues. The 45-residue stretch at 93–137 (DQKMQRRLAQNREAARKSRMRKKAYIQQLESSRSKLMHLEQELQR) folds into the bZIP domain. Residues 95–115 (KMQRRLAQNREAARKSRMRKK) form a basic motif region. A leucine-zipper region spans residues 121-135 (LESSRSKLMHLEQEL). The region spanning 162 to 382 (TLAFDLEYAR…RALSSLWLAR (221 aa)) is the DOG1 domain.

This sequence belongs to the bZIP family. As to quaternary structure, interacts with NPR1/NH1, NPR2/NH2 and NPR3/NH3.

It is found in the nucleus. Its function is as follows. Transcriptional regulator involved in defense response. In Oryza sativa subsp. japonica (Rice), this protein is Transcription factor TGAL3.